We begin with the raw amino-acid sequence, 258 residues long: UPF0246 protein YaaA (258 aa).

It belongs to the UPF0246 family.

The polypeptide is UPF0246 protein YaaA (Escherichia coli O45:K1 (strain S88 / ExPEC)).